The following is an 86-amino-acid chain: Ferredoxin-like protein YgcO (86 aa).

The region spanning 45–74 is the 4Fe-4S ferredoxin-type domain; that stretch reads GNLRIDYRSCLECGTCRLLCDESTLQQWRY.

Belongs to the bacterial-type ferredoxin family. FixX subfamily.

Functionally, could be a 3Fe-4S cluster-containing protein. Probably participates in a redox process with YgcN, YgcQ and YgcR. The sequence is that of Ferredoxin-like protein YgcO (ygcO) from Escherichia coli (strain K12).